The following is a 700-amino-acid chain: Polyribonucleotide nucleotidyltransferase (700 aa).

Positions 486 and 492 each coordinate Mg(2+). The KH domain occupies 554-613; that stretch reads PKIISTTINPDKIREVIGPGGKMINKIIDETGVKIDINDDGRVYIFSSDIQAGKRARSMI. Residues 623 to 691 enclose the S1 motif domain; that stretch reads GQVFLGRVIR…KQGRVNLSRK (69 aa).

Belongs to the polyribonucleotide nucleotidyltransferase family. Mg(2+) serves as cofactor.

The protein resides in the cytoplasm. The enzyme catalyses RNA(n+1) + phosphate = RNA(n) + a ribonucleoside 5'-diphosphate. Its function is as follows. Involved in mRNA degradation. Catalyzes the phosphorolysis of single-stranded polyribonucleotides processively in the 3'- to 5'-direction. This chain is Polyribonucleotide nucleotidyltransferase, found in Acetivibrio thermocellus (strain ATCC 27405 / DSM 1237 / JCM 9322 / NBRC 103400 / NCIMB 10682 / NRRL B-4536 / VPI 7372) (Clostridium thermocellum).